A 154-amino-acid polypeptide reads, in one-letter code: Myoglobin (154 aa).

Positions 2–148 constitute a Globin domain; that stretch reads VLSDAEWQLV…FRKDIAAKYK (147 aa). A Phosphoserine modification is found at Ser4. His65 is a nitrite binding site. His65 is a binding site for O2. Position 68 is a phosphothreonine (Thr68). A heme b-binding site is contributed by His94.

It belongs to the globin family. As to quaternary structure, monomeric.

The protein localises to the cytoplasm. The protein resides in the sarcoplasm. The enzyme catalyses Fe(III)-heme b-[protein] + nitric oxide + H2O = Fe(II)-heme b-[protein] + nitrite + 2 H(+). The catalysed reaction is H2O2 + AH2 = A + 2 H2O. Its function is as follows. Monomeric heme protein which primary function is to store oxygen and facilitate its diffusion within muscle tissues. Reversibly binds oxygen through a pentacoordinated heme iron and enables its timely and efficient release as needed during periods of heightened demand. Depending on the oxidative conditions of tissues and cells, and in addition to its ability to bind oxygen, it also has a nitrite reductase activity whereby it regulates the production of bioactive nitric oxide. Under stress conditions, like hypoxia and anoxia, it also protects cells against reactive oxygen species thanks to its pseudoperoxidase activity. This chain is Myoglobin (MB), found in Eschrichtius robustus (California gray whale).